We begin with the raw amino-acid sequence, 374 residues long: Speckle-type POZ protein (374 aa).

Residues 31 to 161 (KFSYMWTINN…DDKLTLFCEV (131 aa)) enclose the MATH domain. The tract at residues 71-191 (VNPKGLDEES…PECRLADELG (121 aa)) is required for nuclear localization. Residues 123–133 (YRFVQGKDWGF) are important for binding substrate proteins. A BTB domain is found at 173-297 (QNTMNMVKVP…MCEDALCSNL (125 aa)). 2 important for homodimerization regions span residues 186-217 (LADELGGLWENSRFTDCCLCVAGQEFQAHKAI) and 297-355 (LSVE…AYRS).

The protein belongs to the Tdpoz family. In terms of assembly, interacts with GLI2 and GLI3. Homodimer and homooligomer. Heterodimer with SPOPL. Each dimer interacts with two CUL3 molecules. Part of cullin-RING-based BCR (BTB-CUL3-RBX1) E3 ubiquitin-protein ligase complexes that contain CUL3 and homodimeric SPOP, or the heterodimer formed by SPOP and SPOPL, plus a target protein, such as MACROH2A1, PDX1/IPF1, BMI1, BRMS1 and DAXX. Interacts with IRF1; this interaction mediates IRF1 proteasomal degradation. Interacts with HNF1A.

It is found in the nucleus. The protein resides in the nucleus speckle. Its pathway is protein modification; protein ubiquitination. Component of a cullin-RING-based BCR (BTB-CUL3-RBX1) E3 ubiquitin-protein ligase complex that mediates the ubiquitination of target proteins, leading most often to their proteasomal degradation. In complex with CUL3, involved in ubiquitination and proteasomal degradation of BRMS1, DAXX, PDX1/IPF1, GLI2 and GLI3. In complex with CUL3, involved in ubiquitination of MACROH2A1 and BMI1; this does not lead to their proteasomal degradation. Inhibits transcriptional activation of PDX1/IPF1 targets, such as insulin, by promoting PDX1/IPF1 degradation. The cullin-RING-based BCR (BTB-CUL3-RBX1) E3 ubiquitin-protein ligase complex containing homodimeric SPOP has higher ubiquitin ligase activity than the complex that contains the heterodimer formed by SPOP and SPOPL. Involved in the regulation of bromodomain and extra-terminal motif (BET) proteins BRD2, BRD3, BRD4 stability.Plays an essential role for proper translation, but not for their degradation, of critical DNA replication licensing factors CDT1 and CDC6, thereby participating in DNA synthesis and cell proliferation. Regulates interferon regulatory factor 1/IRF1 proteasomal turnover by targeting S/T-rich degrons in IRF1. Involved in ubiquitination of BRDT and promotes its degradation, thereby regulates histone removal in early condensing spermatids prior to histone-to-protamine exchange. In Bos taurus (Bovine), this protein is Speckle-type POZ protein (SPOP).